A 65-amino-acid polypeptide reads, in one-letter code: MSTCGNCDCVDKSQCVKKGNSYGIDIVETEKSYVDEVIVAAEAAEHDGKCKCGAACACTDCKCGN.

The protein belongs to the metallothionein superfamily. Type 15 family.

In terms of biological role, metallothioneins have a high content of cysteine residues that bind various heavy metals. This is Metallothionein-like protein type 3 from Musa acuminata (Banana).